Consider the following 186-residue polypeptide: Acireductone dioxygenase (186 aa).

The Fe(2+) site is built by His-96, His-98, Glu-102, and His-140. Ni(2+) contacts are provided by His-96, His-98, Glu-102, and His-140.

The protein belongs to the acireductone dioxygenase (ARD) family. Monomer. Fe(2+) serves as cofactor. Ni(2+) is required as a cofactor.

The enzyme catalyses 1,2-dihydroxy-5-(methylsulfanyl)pent-1-en-3-one + O2 = 3-(methylsulfanyl)propanoate + CO + formate + 2 H(+). The catalysed reaction is 1,2-dihydroxy-5-(methylsulfanyl)pent-1-en-3-one + O2 = 4-methylsulfanyl-2-oxobutanoate + formate + 2 H(+). It functions in the pathway amino-acid biosynthesis; L-methionine biosynthesis via salvage pathway; L-methionine from S-methyl-5-thio-alpha-D-ribose 1-phosphate: step 5/6. In terms of biological role, catalyzes 2 different reactions between oxygen and the acireductone 1,2-dihydroxy-3-keto-5-methylthiopentene (DHK-MTPene) depending upon the metal bound in the active site. Fe-containing acireductone dioxygenase (Fe-ARD) produces formate and 2-keto-4-methylthiobutyrate (KMTB), the alpha-ketoacid precursor of methionine in the methionine recycle pathway. Ni-containing acireductone dioxygenase (Ni-ARD) produces methylthiopropionate, carbon monoxide and formate, and does not lie on the methionine recycle pathway. This chain is Acireductone dioxygenase, found in Methylococcus capsulatus (strain ATCC 33009 / NCIMB 11132 / Bath).